The primary structure comprises 158 residues: 6,7-dimethyl-8-ribityllumazine synthase (158 aa).

5-amino-6-(D-ribitylamino)uracil is bound by residues F22, 56–58 (ALE), and 80–82 (VVI). 85–86 (ET) is a binding site for (2S)-2-hydroxy-3-oxobutyl phosphate. Residue H88 is the Proton donor of the active site. Position 113 (N113) interacts with 5-amino-6-(D-ribitylamino)uracil. R127 contacts (2S)-2-hydroxy-3-oxobutyl phosphate.

The protein belongs to the DMRL synthase family.

The catalysed reaction is (2S)-2-hydroxy-3-oxobutyl phosphate + 5-amino-6-(D-ribitylamino)uracil = 6,7-dimethyl-8-(1-D-ribityl)lumazine + phosphate + 2 H2O + H(+). Its pathway is cofactor biosynthesis; riboflavin biosynthesis; riboflavin from 2-hydroxy-3-oxobutyl phosphate and 5-amino-6-(D-ribitylamino)uracil: step 1/2. Functionally, catalyzes the formation of 6,7-dimethyl-8-ribityllumazine by condensation of 5-amino-6-(D-ribitylamino)uracil with 3,4-dihydroxy-2-butanone 4-phosphate. This is the penultimate step in the biosynthesis of riboflavin. The protein is 6,7-dimethyl-8-ribityllumazine synthase of Neisseria meningitidis serogroup C / serotype 2a (strain ATCC 700532 / DSM 15464 / FAM18).